The sequence spans 165 residues: Nascent polypeptide-associated complex subunit beta (165 aa).

The 65-residue stretch at 33 to 97 (TTDDKRLQST…PQTKKLQDIL (65 aa)) folds into the NAC-A/B domain. Residues 120-165 (QKQAPGAGDVPATIQEEDDDDDVPDLVVGETFETPATEEAPKAAAS) form a disordered region. Positions 134–143 (QEEDDDDDVP) are enriched in acidic residues. Residues 144 to 165 (DLVVGETFETPATEEAPKAAAS) show a composition bias toward low complexity.

It belongs to the NAC-beta family. As to quaternary structure, part of the nascent polypeptide-associated complex (NAC).

The polypeptide is Nascent polypeptide-associated complex subunit beta (Arabidopsis thaliana (Mouse-ear cress)).